Consider the following 295-residue polypeptide: Xyloglucan endotransglucosylase/hydrolase (295 aa).

The signal sequence occupies residues 1-23 (MAVSSTPWALVALFLMASSTVMA). Residues 25–222 (PPRKAIDVPF…WANAPFIASY (198 aa)) enclose the GH16 domain. Catalysis depends on Glu108, which acts as the Nucleophile. Catalysis depends on Glu112, which acts as the Proton donor. Glu112 contributes to the xyloglucan binding site. An N-linked (GlcNAc...) asparagine glycan is attached at Asn116. Residues 125-127 (QTN), 135-137 (NRE), 201-202 (DW), and Gly206 contribute to the xyloglucan site. Cystine bridges form between Cys230/Cys239 and Cys276/Cys289. Arg281 contacts xyloglucan.

It belongs to the glycosyl hydrolase 16 family. XTH group 1 subfamily. Post-translationally, contains at least one intrachain disulfide bond essential for its enzymatic activity. In terms of processing, the N-glycan consists of an (GlcNAc)2(Hex)6 oligosaccharide; not essential for its enzymatic activity.

It localises to the secreted. The protein localises to the cell wall. It is found in the extracellular space. Its subcellular location is the apoplast. It carries out the reaction breaks a beta-(1-&gt;4) bond in the backbone of a xyloglucan and transfers the xyloglucanyl segment on to O-4 of the non-reducing terminal glucose residue of an acceptor, which can be a xyloglucan or an oligosaccharide of xyloglucan.. In terms of biological role, catalyzes xyloglucan endohydrolysis (XEH) and/or endotransglycosylation (XET). Cleaves and religates xyloglucan polymers, an essential constituent of the primary cell wall, and thereby participates in cell wall construction of growing tissues. The chain is Xyloglucan endotransglucosylase/hydrolase (XET16A) from Brassica oleracea var. botrytis (Cauliflower).